We begin with the raw amino-acid sequence, 83 residues long: Cytochrome c oxidase subunit 7A2, mitochondrial (83 aa).

Residues 1–23 constitute a mitochondrion transit peptide; sequence MLRNVLALRQIAQRTISTTSRRH. Topologically, residues 24–48 are mitochondrial matrix; sequence FENKVPEKQKLFQEDNGMPVHLKGG. An N6-acetyllysine modification is found at K33. The chain crosses the membrane as a helical span at residues 49–77; sequence TSDALLYRATMLLTVGGTAYAIYMLAMAA. Residues 78-83 lie on the Mitochondrial intermembrane side of the membrane; the sequence is FPKKQN.

Belongs to the cytochrome c oxidase VIIa family. In terms of assembly, component of the cytochrome c oxidase (complex IV, CIV), a multisubunit enzyme composed of 14 subunits. The complex is composed of a catalytic core of 3 subunits MT-CO1, MT-CO2 and MT-CO3, encoded in the mitochondrial DNA, and 11 supernumerary subunits COX4I, COX5A, COX5B, COX6A, COX6B, COX6C, COX7A, COX7B, COX7C, COX8 and NDUFA4, which are encoded in the nuclear genome. The complex exists as a monomer or a dimer and forms supercomplexes (SCs) in the inner mitochondrial membrane with NADH-ubiquinone oxidoreductase (complex I, CI) and ubiquinol-cytochrome c oxidoreductase (cytochrome b-c1 complex, complex III, CIII), resulting in different assemblies (supercomplex SCI(1)III(2)IV(1) and megacomplex MCI(2)III(2)IV(2)). Interacts with PET100.

It is found in the mitochondrion inner membrane. Its pathway is energy metabolism; oxidative phosphorylation. In terms of biological role, component of the cytochrome c oxidase, the last enzyme in the mitochondrial electron transport chain which drives oxidative phosphorylation. The respiratory chain contains 3 multisubunit complexes succinate dehydrogenase (complex II, CII), ubiquinol-cytochrome c oxidoreductase (cytochrome b-c1 complex, complex III, CIII) and cytochrome c oxidase (complex IV, CIV), that cooperate to transfer electrons derived from NADH and succinate to molecular oxygen, creating an electrochemical gradient over the inner membrane that drives transmembrane transport and the ATP synthase. Cytochrome c oxidase is the component of the respiratory chain that catalyzes the reduction of oxygen to water. Electrons originating from reduced cytochrome c in the intermembrane space (IMS) are transferred via the dinuclear copper A center (CU(A)) of subunit 2 and heme A of subunit 1 to the active site in subunit 1, a binuclear center (BNC) formed by heme A3 and copper B (CU(B)). The BNC reduces molecular oxygen to 2 water molecules using 4 electrons from cytochrome c in the IMS and 4 protons from the mitochondrial matrix. This chain is Cytochrome c oxidase subunit 7A2, mitochondrial (Cox7a2), found in Rattus norvegicus (Rat).